Here is a 142-residue protein sequence, read N- to C-terminus: Large ribosomal subunit protein uL11 (142 aa).

This sequence belongs to the universal ribosomal protein uL11 family. As to quaternary structure, part of the ribosomal stalk of the 50S ribosomal subunit. Interacts with L10 and the large rRNA to form the base of the stalk. L10 forms an elongated spine to which L12 dimers bind in a sequential fashion forming a multimeric L10(L12)X complex. One or more lysine residues are methylated.

In terms of biological role, forms part of the ribosomal stalk which helps the ribosome interact with GTP-bound translation factors. This is Large ribosomal subunit protein uL11 from Citrobacter koseri (strain ATCC BAA-895 / CDC 4225-83 / SGSC4696).